Here is a 512-residue protein sequence, read N- to C-terminus: Nephrocan (512 aa).

The first 19 residues, 1-19 (MHPLWAFLLGLSLTNGLSA), serve as a signal peptide directing secretion. In terms of domain architecture, LRRNT spans 20-44 (NCPGRCSCDSMQSVQCYRLMELPSG). 17 LRR repeats span residues 45–69 (IPSTTKRLYISHSRIQHLQLSNFTG), 71–93 (LALEDFILLASGTESIENDTFKT), 94–117 (LSTLKTLELWKNKLRQVPSALPAN), 119–138 (EVLKLNDNAICALRGSEFEG), 139–162 (LKNLKVLELKNNLISSLSPSMLSP), 164–185 (ASLQSLMVDGNNIESVVGPLSL), 186–208 (PHLKYMSMENNQLHLIPGNVFTS), 210–232 (QNLQFLSFSGNFLTKIPINLPKS), 234–253 (LSLKMERNQLKVVRFRDMKH), 254–276 (LENLSHLYLSENFLSSIDGAQQL), 277–299 (TNLTTLEVSQNQLQMLPPRLPSR), 301–320 (QKLDCSSNFIQRVTAPEFQD), 321–344 (LRDLKHLFLDNNVVSLFEAGALQR), 346–371 (SQLSNLALEQNLLLSIPLRLPKTLAR), 373–389 (DLKGNAIQDMAERELRD), 390–413 (LKQLQVLNLRNNRISALDFKALEG), and 415–442 (PRLRHLYLDGNPWNCTCSLLRAREVLKA). A glycan (N-linked (GlcNAc...) asparagine) is linked at asparagine 66. Over residues 474–484 (EHHLQQSEKSK) the composition is skewed to basic and acidic residues. The disordered stretch occupies residues 474-512 (EHHLQQSEKSKETKKKPKPEDSSSIRLNMDDDDDDYEID). A compositionally biased stretch (acidic residues) spans 503-512 (DDDDDDYEID).

This sequence belongs to the small leucine-rich proteoglycan (SLRP) family. In terms of processing, N-glycosylated. In terms of tissue distribution, expressed at highest levels in the kidney, where it is primarily detected in the epithelial cells of distal tubules and collecting ducts, and more weakly in proximal epithelial cells. Expressed at lower levels in heart and lung (at protein level). Detected in skeletal muscle.

Its subcellular location is the secreted. Its function is as follows. May inhibit TGF-beta signaling. The chain is Nephrocan from Mus musculus (Mouse).